The following is a 292-amino-acid chain: Phosphatidylglycerol--prolipoprotein diacylglyceryl transferase (292 aa).

Transmembrane regions (helical) follow at residues 7–27, 45–65, 83–103, and 116–136; these read IILS…FLRE, FQLR…YVLA, LFWG…IFNW, and IWHG…MIFI. An a 1,2-diacyl-sn-glycero-3-phospho-(1'-sn-glycerol)-binding site is contributed by arginine 165. 2 helical membrane-spanning segments follow: residues 204–224 and 264–284; these read PTFL…YFFV and AAQV…AYII.

It belongs to the Lgt family.

It is found in the cell inner membrane. The catalysed reaction is L-cysteinyl-[prolipoprotein] + a 1,2-diacyl-sn-glycero-3-phospho-(1'-sn-glycerol) = an S-1,2-diacyl-sn-glyceryl-L-cysteinyl-[prolipoprotein] + sn-glycerol 1-phosphate + H(+). The protein operates within protein modification; lipoprotein biosynthesis (diacylglyceryl transfer). Catalyzes the transfer of the diacylglyceryl group from phosphatidylglycerol to the sulfhydryl group of the N-terminal cysteine of a prolipoprotein, the first step in the formation of mature lipoproteins. In Fervidobacterium nodosum (strain ATCC 35602 / DSM 5306 / Rt17-B1), this protein is Phosphatidylglycerol--prolipoprotein diacylglyceryl transferase.